We begin with the raw amino-acid sequence, 275 residues long: MRFRTLLIAFLALCLGLITACSEGPANAVNPQDLTYDEILNTGLANKCPQISEFTRGSIPIEPGQTYFVDDLCLEPQEYFVKEEPVNKRQEAEYVPGKLLTRYTTSLEQISGKITVDEDGVVTFYEEGGIDFQPVTVQLPGGEQVPFFFTIKNLVGKTEPGFSSINSSIDFEGDFRVPSYRGATFLDPKGRGLATGYDNAVALPATADKEDYANVKQTPIGKGSISLQVTKVDQATGEIAGVFDSEQPSDTDLGAKEPVEVKIRGIFYARVTPEA.

Positions 1 to 28 (MRFRTLLIAFLALCLGLITACSEGPANA) are cleaved as a signal peptide.

Belongs to the PsbO family. As to quaternary structure, PSII is composed of 1 copy each of membrane proteins PsbA, PsbB, PsbC, PsbD, PsbE, PsbF, PsbH, PsbI, PsbJ, PsbK, PsbL, PsbM, PsbT, PsbX, PsbY, PsbZ, Psb30/Ycf12, peripheral proteins PsbO, CyanoQ (PsbQ), PsbU, PsbV and a large number of cofactors. It forms dimeric complexes.

It is found in the cellular thylakoid membrane. One of the extrinsic, lumenal subunits of photosystem II (PSII), which stabilize and protect the oxygen-evolving complex. PSII is a light-driven water plastoquinone oxidoreductase, using light energy to abstract electrons from H(2)O, generating a proton gradient subsequently used for ATP formation. Required for dimerization of PSII and for binding of PsbQ to PSII. The sequence is that of Photosystem II extrinsic protein O from Crocosphaera subtropica (strain ATCC 51142 / BH68) (Cyanothece sp. (strain ATCC 51142)).